The sequence spans 365 residues: MFTDYVRILAKAGKGGNGCISFCREAFRPHGGPDGGDGGKGGDVILEVNPQLSDLSHFLFSPHQFAEDGQPGKGQKRKGRDGKNLKLEVPPGVVVYQLDPNRIFHSSRDLLPIPKPGEPLKKIGELIEPGMRFILCKGGKGGRGNFQFRSPINQSPRYCEEGEEGQSGQFLLELKTIADVGFVGLPNSGKSTLLRQVTDAKPKTAPYPFTTLKPHVGIVNFDDGYRMSCADIPGLIEGAHQGKGLGFYFLRHIERSHLLVYVLDLADPFLDPVQVFYTLRNELEKYNKELLKKPFLIVGNKVDLVAADSLNHKSLDFNKRTGLSFLPISALKAQGIELFLNSCRKSFESTKKLIPSSPKVLSPLT.

Residues 1-177 form the Obg domain; that stretch reads MFTDYVRILA…GQFLLELKTI (177 aa). Positions 64-85 are disordered; that stretch reads QFAEDGQPGKGQKRKGRDGKNL. The 171-residue stretch at 178 to 348 folds into the OBG-type G domain; that stretch reads ADVGFVGLPN…FLNSCRKSFE (171 aa). GTP contacts are provided by residues 184–191, 209–213, 231–234, 300–303, and 329–331; these read GLPNSGKS, FTTLK, DIPG, NKVD, and SAL. The Mg(2+) site is built by serine 191 and threonine 211.

It belongs to the TRAFAC class OBG-HflX-like GTPase superfamily. OBG GTPase family. In terms of assembly, monomer. Mg(2+) serves as cofactor.

The protein resides in the cytoplasm. Its function is as follows. An essential GTPase which binds GTP, GDP and possibly (p)ppGpp with moderate affinity, with high nucleotide exchange rates and a fairly low GTP hydrolysis rate. Plays a role in control of the cell cycle, stress response, ribosome biogenesis and in those bacteria that undergo differentiation, in morphogenesis control. The polypeptide is GTPase Obg (Methylacidiphilum infernorum (isolate V4) (Methylokorus infernorum (strain V4))).